Consider the following 649-residue polypeptide: Acetyl-coenzyme A synthetase (649 aa).

CoA contacts are provided by residues 191 to 194 (RGGR), Thr-309, and Asn-333. Residues 385 to 387 (GEP), 409 to 414 (DTWWQT), Asp-498, and Arg-513 contribute to the ATP site. Residue Ser-521 participates in CoA binding. Arg-524 is a binding site for ATP. Mg(2+) is bound by residues Val-535, His-537, and Val-540. Residue Arg-582 participates in CoA binding. Lys-607 bears the N6-acetyllysine mark.

It belongs to the ATP-dependent AMP-binding enzyme family. Requires Mg(2+) as cofactor. Acetylated. Deacetylation by the SIR2-homolog deacetylase activates the enzyme.

It carries out the reaction acetate + ATP + CoA = acetyl-CoA + AMP + diphosphate. Functionally, catalyzes the conversion of acetate into acetyl-CoA (AcCoA), an essential intermediate at the junction of anabolic and catabolic pathways. AcsA undergoes a two-step reaction. In the first half reaction, AcsA combines acetate with ATP to form acetyl-adenylate (AcAMP) intermediate. In the second half reaction, it can then transfer the acetyl group from AcAMP to the sulfhydryl group of CoA, forming the product AcCoA. The chain is Acetyl-coenzyme A synthetase from Novosphingobium aromaticivorans (strain ATCC 700278 / DSM 12444 / CCUG 56034 / CIP 105152 / NBRC 16084 / F199).